A 136-amino-acid polypeptide reads, in one-letter code: Immunoglobulin J chain (136 aa).

Disulfide bonds link Cys-12-Cys-100, Cys-71-Cys-91, and Cys-108-Cys-133. Asn-48 carries an N-linked (GlcNAc...) (complex) asparagine glycan.

Part of the secretory IgA (sIgA) complex that consists of two, four or five IgA monomers, and two additional non-Ig polypeptides, namely the JCHAIN and the secretory component (the proteolytic product of PIGR). Part of the secretory IgM (sIgM) complex that consist of five IgM monomers, and two additional non-Ig polypeptides, namely the JCHAIN and the secretory component (the proteolytic product of PIGR). JCHAIN-containing IgM interacts (via CH4 domain) with FCRM (via Ig-like domain).

It is found in the secreted. Functionally, serves to link two monomer units of either IgM or IgA. In the case of IgM, the J chain-joined dimer is a nucleating unit for the IgM pentamer, and in the case of IgA it induces dimers and/or larger polymers. It also helps to bind these immunoglobulins to secretory component. In Oryctolagus cuniculus (Rabbit), this protein is Immunoglobulin J chain.